The primary structure comprises 274 residues: Large ribosomal subunit protein uL2 (274 aa).

Disordered stretches follow at residues 34–53 (IAPI…TMRY) and 216–274 (RRPR…RRKK).

It belongs to the universal ribosomal protein uL2 family. In terms of assembly, part of the 50S ribosomal subunit. Forms a bridge to the 30S subunit in the 70S ribosome.

Its function is as follows. One of the primary rRNA binding proteins. Required for association of the 30S and 50S subunits to form the 70S ribosome, for tRNA binding and peptide bond formation. It has been suggested to have peptidyltransferase activity; this is somewhat controversial. Makes several contacts with the 16S rRNA in the 70S ribosome. The sequence is that of Large ribosomal subunit protein uL2 from Flavobacterium psychrophilum (strain ATCC 49511 / DSM 21280 / CIP 103535 / JIP02/86).